Consider the following 194-residue polypeptide: FMN-dependent NADH:quinone oxidoreductase (194 aa).

FMN-binding positions include S10 and 90–93; that span reads MYNL.

It belongs to the azoreductase type 1 family. Homodimer. Requires FMN as cofactor.

It carries out the reaction 2 a quinone + NADH + H(+) = 2 a 1,4-benzosemiquinone + NAD(+). It catalyses the reaction N,N-dimethyl-1,4-phenylenediamine + anthranilate + 2 NAD(+) = 2-(4-dimethylaminophenyl)diazenylbenzoate + 2 NADH + 2 H(+). In terms of biological role, quinone reductase that provides resistance to thiol-specific stress caused by electrophilic quinones. Also exhibits azoreductase activity. Catalyzes the reductive cleavage of the azo bond in aromatic azo compounds to the corresponding amines. The polypeptide is FMN-dependent NADH:quinone oxidoreductase (Haemophilus influenzae (strain 86-028NP)).